Consider the following 69-residue polypeptide: Cytochrome c oxidase subunit 8A, mitochondrial (69 aa).

A mitochondrion-targeting transit peptide spans 1-25 (MSVLTPLLLRGLTGSARRLPVPRAQ). The SIFI-degron motif lies at 2 to 19 (SVLTPLLLRGLTGSARRL). The Mitochondrial matrix segment spans residues 26–36 (VHSMPPEQKLG). The helical transmembrane segment at 37–60 (VLELAIGFTSCLVTFLLPAGWILS) threads the bilayer. Over 61–69 (HLDSYKKRG) the chain is Mitochondrial intermembrane.

This sequence belongs to the cytochrome c oxidase VIII family. Component of the cytochrome c oxidase (complex IV, CIV), a multisubunit enzyme composed of 14 subunits. The complex is composed of a catalytic core of 3 subunits MT-CO1, MT-CO2 and MT-CO3, encoded in the mitochondrial DNA, and 11 supernumerary subunits COX4I, COX5A, COX5B, COX6A, COX6B, COX6C, COX7A, COX7B, COX7C, COX8 and NDUFA4, which are encoded in the nuclear genome. The complex exists as a monomer or a dimer and forms supercomplexes (SCs) in the inner mitochondrial membrane with NADH-ubiquinone oxidoreductase (complex I, CI) and ubiquinol-cytochrome c oxidoreductase (cytochrome b-c1 complex, complex III, CIII), resulting in different assemblies (supercomplex SCI(1)III(2)IV(1) and megacomplex MCI(2)III(2)IV(2)). In terms of processing, in response to mitochondrial stress, the precursor protein is ubiquitinated by the SIFI complex in the cytoplasm before mitochondrial import, leading to its degradation. Within the SIFI complex, UBR4 initiates ubiquitin chain that are further elongated or branched by KCMF1.

The protein localises to the mitochondrion inner membrane. Its pathway is energy metabolism; oxidative phosphorylation. Functionally, component of the cytochrome c oxidase, the last enzyme in the mitochondrial electron transport chain which drives oxidative phosphorylation. The respiratory chain contains 3 multisubunit complexes succinate dehydrogenase (complex II, CII), ubiquinol-cytochrome c oxidoreductase (cytochrome b-c1 complex, complex III, CIII) and cytochrome c oxidase (complex IV, CIV), that cooperate to transfer electrons derived from NADH and succinate to molecular oxygen, creating an electrochemical gradient over the inner membrane that drives transmembrane transport and the ATP synthase. Cytochrome c oxidase is the component of the respiratory chain that catalyzes the reduction of oxygen to water. Electrons originating from reduced cytochrome c in the intermembrane space (IMS) are transferred via the dinuclear copper A center (CU(A)) of subunit 2 and heme A of subunit 1 to the active site in subunit 1, a binuclear center (BNC) formed by heme A3 and copper B (CU(B)). The BNC reduces molecular oxygen to 2 water molecules using 4 electrons from cytochrome c in the IMS and 4 protons from the mitochondrial matrix. The protein is Cytochrome c oxidase subunit 8A, mitochondrial (COX8A) of Saimiri sciureus (Common squirrel monkey).